Here is a 209-residue protein sequence, read N- to C-terminus: Thiamine-phosphate synthase (209 aa).

4-amino-2-methyl-5-(diphosphooxymethyl)pyrimidine is bound by residues 38-42 (QYRDK) and Asn70. Asp71 and Asp89 together coordinate Mg(2+). Thr108 serves as a coordination point for 4-amino-2-methyl-5-(diphosphooxymethyl)pyrimidine. 135–137 (SNT) contacts 2-[(2R,5Z)-2-carboxy-4-methylthiazol-5(2H)-ylidene]ethyl phosphate. Residue Lys138 coordinates 4-amino-2-methyl-5-(diphosphooxymethyl)pyrimidine. 2-[(2R,5Z)-2-carboxy-4-methylthiazol-5(2H)-ylidene]ethyl phosphate is bound at residue Gly165.

It belongs to the thiamine-phosphate synthase family. Mg(2+) serves as cofactor.

It catalyses the reaction 2-[(2R,5Z)-2-carboxy-4-methylthiazol-5(2H)-ylidene]ethyl phosphate + 4-amino-2-methyl-5-(diphosphooxymethyl)pyrimidine + 2 H(+) = thiamine phosphate + CO2 + diphosphate. The enzyme catalyses 2-(2-carboxy-4-methylthiazol-5-yl)ethyl phosphate + 4-amino-2-methyl-5-(diphosphooxymethyl)pyrimidine + 2 H(+) = thiamine phosphate + CO2 + diphosphate. The catalysed reaction is 4-methyl-5-(2-phosphooxyethyl)-thiazole + 4-amino-2-methyl-5-(diphosphooxymethyl)pyrimidine + H(+) = thiamine phosphate + diphosphate. It participates in cofactor biosynthesis; thiamine diphosphate biosynthesis; thiamine phosphate from 4-amino-2-methyl-5-diphosphomethylpyrimidine and 4-methyl-5-(2-phosphoethyl)-thiazole: step 1/1. Its function is as follows. Condenses 4-methyl-5-(beta-hydroxyethyl)thiazole monophosphate (THZ-P) and 2-methyl-4-amino-5-hydroxymethyl pyrimidine pyrophosphate (HMP-PP) to form thiamine monophosphate (TMP). This is Thiamine-phosphate synthase from Ectopseudomonas mendocina (strain ymp) (Pseudomonas mendocina).